Reading from the N-terminus, the 196-residue chain is 3-isopropylmalate dehydratase small subunit (196 aa).

This sequence belongs to the LeuD family. LeuD type 1 subfamily. Heterodimer of LeuC and LeuD.

The catalysed reaction is (2R,3S)-3-isopropylmalate = (2S)-2-isopropylmalate. The protein operates within amino-acid biosynthesis; L-leucine biosynthesis; L-leucine from 3-methyl-2-oxobutanoate: step 2/4. Functionally, catalyzes the isomerization between 2-isopropylmalate and 3-isopropylmalate, via the formation of 2-isopropylmaleate. In Rhodopirellula baltica (strain DSM 10527 / NCIMB 13988 / SH1), this protein is 3-isopropylmalate dehydratase small subunit.